A 515-amino-acid chain; its full sequence is Lysosomal acid glucosylceramidase (515 aa).

The N-terminal stretch at 1–19 (MAARLIGFFLFQAVSWAYG) is a signal peptide. 2 disulfide bridges follow: Cys-23–Cys-35 and Cys-37–Cys-42. 2 N-linked (GlcNAc...) asparagine glycosylation sites follow: Asn-38 and Asn-78. The N-linked (GlcNAc...) (high mannose) asparagine glycan is linked to Asn-165. Catalysis depends on Glu-254, which acts as the Proton donor. Asn-289 carries an N-linked (GlcNAc...) asparagine glycan. Glu-358 serves as the catalytic Nucleophile. Asn-480 carries an N-linked (GlcNAc...) asparagine glycan.

It belongs to the glycosyl hydrolase 30 family. As to quaternary structure, interacts with saposin-C. Interacts with SCARB2. Interacts with TCP1. Interacts with GRN; this interaction prevents aggregation of GBA1-SCARB2 complex via interaction with HSPA1A upon stress.

Its subcellular location is the lysosome membrane. The catalysed reaction is a beta-D-glucosyl-(1&lt;-&gt;1')-N-acylsphing-4-enine + H2O = an N-acylsphing-4-enine + D-glucose. The enzyme catalyses a beta-D-galactosyl-(1&lt;-&gt;1')-N-acylsphing-4-enine + H2O = an N-acylsphing-4-enine + D-galactose. It catalyses the reaction cholesteryl 3-beta-D-glucoside + H2O = cholesterol + D-glucose. It carries out the reaction a beta-D-glucosyl-(1&lt;-&gt;1')-N-acylsphing-4-enine + cholesterol = cholesteryl 3-beta-D-glucoside + an N-acylsphing-4-enine. The catalysed reaction is beta-D-glucosyl-(1&lt;-&gt;1')-N-hexadecanoylsphing-4-enine + cholesterol = cholesteryl 3-beta-D-glucoside + N-hexadecanoylsphing-4-enine. The enzyme catalyses beta-D-glucosyl-N-(9Z-octadecenoyl)-sphing-4E-enine + cholesterol = N-(9Z-octadecenoyl)-sphing-4-enine + cholesteryl 3-beta-D-glucoside. It catalyses the reaction beta-D-glucosyl-N-octanoylsphing-4E-enine + cholesterol = N-octanoylsphing-4-enine + cholesteryl 3-beta-D-glucoside. It carries out the reaction beta-D-glucosyl-N-dodecanoylsphing-4-enine + cholesterol = N-dodecanoylsphing-4-enine + cholesteryl 3-beta-D-glucoside. The catalysed reaction is beta-D-glucosyl-(1&lt;-&gt;1)-N-octadecanoylsphing-4-enine + cholesterol = N-octadecanoylsphing-4-enine + cholesteryl 3-beta-D-glucoside. The enzyme catalyses beta-D-glucosyl-(1&lt;-&gt;1')-N-(15Z-tetracosenoyl)-sphing-4-enine + cholesterol = N-(15Z-tetracosenoyl)-sphing-4-enine + cholesteryl 3-beta-D-glucoside. It catalyses the reaction a beta-D-galactosyl-(1&lt;-&gt;1')-N-acylsphing-4-enine + cholesterol = cholesteryl 3-beta-D-galactoside + an N-acylsphing-4-enine. It carries out the reaction 1-(beta-D-galactosyl)-N-dodecanoylsphing-4-enine + cholesterol = cholesteryl 3-beta-D-galactoside + N-dodecanoylsphing-4-enine. The catalysed reaction is a beta-D-xylosyl-(1&lt;-&gt;1')-N-acylsphing-4-enine + cholesterol = cholesteryl 3-beta-D-xyloside + an N-acylsphing-4-enine. The enzyme catalyses beta-D-xylosyl-(1&lt;-&gt;1')-N-(9Z-octadecenoyl)-sphing-4-enine + cholesterol = cholesteryl 3-beta-D-xyloside + N-(9Z-octadecenoyl)-sphing-4-enine. It participates in steroid metabolism; cholesterol metabolism. The protein operates within sphingolipid metabolism. With respect to regulation, inhibited by conduritol B epoxide/CBE. Glucosylceramidase that catalyzes, within the lysosomal compartment, the hydrolysis of glucosylceramides/GlcCers (such as beta-D-glucosyl-(1&lt;-&gt;1')-N-acylsphing-4-enine) into free ceramides (such as N-acylsphing-4-enine) and glucose. Plays a central role in the degradation of complex lipids and the turnover of cellular membranes. Through the production of ceramides, participates in the PKC-activated salvage pathway of ceramide formation. Catalyzes the glucosylation of cholesterol, through a transglucosylation reaction where glucose is transferred from GlcCer to cholesterol. GlcCer containing mono-unsaturated fatty acids (such as beta-D-glucosyl-N-(9Z-octadecenoyl)-sphing-4-enine) are preferred as glucose donors for cholesterol glucosylation when compared with GlcCer containing same chain length of saturated fatty acids (such as beta-D-glucosyl-N-octadecanoyl-sphing-4-enine). Under specific conditions, may alternatively catalyze the reverse reaction, transferring glucose from cholesteryl 3-beta-D-glucoside to ceramide. Can also hydrolyze cholesteryl 3-beta-D-glucoside producing glucose and cholesterol. Catalyzes the hydrolysis of galactosylceramides/GalCers (such as beta-D-galactosyl-(1&lt;-&gt;1')-N-acylsphing-4-enine), as well as the transfer of galactose between GalCers and cholesterol in vitro, but with lower activity than with GlcCers. Contrary to GlcCer and GalCer, xylosylceramide/XylCer (such as beta-D-xyosyl-(1&lt;-&gt;1')-N-acylsphing-4-enine) is not a good substrate for hydrolysis, however it is a good xylose donor for transxylosylation activity to form cholesteryl 3-beta-D-xyloside. This chain is Lysosomal acid glucosylceramidase (Gba1), found in Mus musculus (Mouse).